A 92-amino-acid chain; its full sequence is PqqA binding protein (92 aa).

This sequence belongs to the PqqD family. As to quaternary structure, monomer. Interacts with PqqE.

It functions in the pathway cofactor biosynthesis; pyrroloquinoline quinone biosynthesis. Its function is as follows. Functions as a PqqA binding protein and presents PqqA to PqqE, in the pyrroloquinoline quinone (PQQ) biosynthetic pathway. The protein is PqqA binding protein of Xanthomonas euvesicatoria pv. vesicatoria (strain 85-10) (Xanthomonas campestris pv. vesicatoria).